A 207-amino-acid polypeptide reads, in one-letter code: Uridine kinase (207 aa).

Residue 11–18 participates in ATP binding; it reads GGSGSGKT.

It belongs to the uridine kinase family.

The protein localises to the cytoplasm. It carries out the reaction uridine + ATP = UMP + ADP + H(+). The catalysed reaction is cytidine + ATP = CMP + ADP + H(+). It functions in the pathway pyrimidine metabolism; CTP biosynthesis via salvage pathway; CTP from cytidine: step 1/3. Its pathway is pyrimidine metabolism; UMP biosynthesis via salvage pathway; UMP from uridine: step 1/1. The protein is Uridine kinase of Staphylococcus aureus (strain Mu3 / ATCC 700698).